The primary structure comprises 160 residues: Small ribosomal subunit protein uS9 (160 aa).

This sequence belongs to the universal ribosomal protein uS9 family.

The protein is Small ribosomal subunit protein uS9 of Bradyrhizobium sp. (strain ORS 278).